Reading from the N-terminus, the 722-residue chain is Neprilysin-1 (722 aa).

The first 17 residues, 1-17 (MAVALLVALCVVSSRMA), serve as a signal peptide directing secretion. In terms of domain architecture, Peptidase M13 spans 32–722 (VCNSPVCQKA…MNPTHKCLLW (691 aa)). Cystine bridges form between Cys33–Cys38, Cys56–Cys707, Cys64–Cys667, Cys120–Cys378, and Cys589–Cys719. 4 N-linked (GlcNAc...) asparagine glycosylation sites follow: Asn100, Asn184, Asn207, and Asn424. His552 contacts Zn(2+). The active site involves Glu553. Residue His556 coordinates Zn(2+). A glycan (N-linked (GlcNAc...) asparagine) is linked at Asn609. Glu614 is a binding site for Zn(2+). Catalysis depends on Asp618, which acts as the Proton donor.

This sequence belongs to the peptidase M13 family. The cofactor is Zn(2+). In terms of processing, contains 5 disulfide bonds. In terms of tissue distribution, expressed by the venom gland.

It localises to the secreted. This chain is Neprilysin-1, found in Trittame loki (Brush-footed trapdoor spider).